Here is a 409-residue protein sequence, read N- to C-terminus: L-cysteine:1D-myo-inositol 2-amino-2-deoxy-alpha-D-glucopyranoside ligase (409 aa).

Cysteine 43 contributes to the Zn(2+) binding site. Residues 43–46 (CGIT), threonine 58, and 81–83 (NVT) each bind L-cysteinyl-5'-AMP. The short motif at 45 to 55 (ITPYDATHMGH) is the 'HIGH' region element. The short motif at 183-188 (ERGGDP) is the 'ERGGDP' region element. Tryptophan 224 serves as a coordination point for L-cysteinyl-5'-AMP. Cysteine 228 is a Zn(2+) binding site. 246-248 (GSD) is an L-cysteinyl-5'-AMP binding site. Histidine 253 lines the Zn(2+) pocket. Valine 280 serves as a coordination point for L-cysteinyl-5'-AMP. A 'KMSKS' region motif is present at residues 286-290 (KMSKS).

It belongs to the class-I aminoacyl-tRNA synthetase family. MshC subfamily. As to quaternary structure, monomer. Requires Zn(2+) as cofactor.

It carries out the reaction 1D-myo-inositol 2-amino-2-deoxy-alpha-D-glucopyranoside + L-cysteine + ATP = 1D-myo-inositol 2-(L-cysteinylamino)-2-deoxy-alpha-D-glucopyranoside + AMP + diphosphate + H(+). Its function is as follows. Catalyzes the ATP-dependent condensation of GlcN-Ins and L-cysteine to form L-Cys-GlcN-Ins. The polypeptide is L-cysteine:1D-myo-inositol 2-amino-2-deoxy-alpha-D-glucopyranoside ligase (mshC) (Streptomyces avermitilis (strain ATCC 31267 / DSM 46492 / JCM 5070 / NBRC 14893 / NCIMB 12804 / NRRL 8165 / MA-4680)).